A 553-amino-acid chain; its full sequence is Hydroxylamine reductase (553 aa).

[2Fe-2S] cluster-binding residues include Cys3, Cys6, Cys18, and Cys25. 8 residues coordinate hybrid [4Fe-2O-2S] cluster: His249, Glu273, Cys317, Cys405, Cys433, Cys459, Glu493, and Lys495. Cys405 bears the Cysteine persulfide mark.

The protein belongs to the HCP family. Requires [2Fe-2S] cluster as cofactor. The cofactor is hybrid [4Fe-2O-2S] cluster.

Its subcellular location is the cytoplasm. It catalyses the reaction A + NH4(+) + H2O = hydroxylamine + AH2 + H(+). Catalyzes the reduction of hydroxylamine to form NH(3) and H(2)O. The sequence is that of Hydroxylamine reductase from Mannheimia succiniciproducens (strain KCTC 0769BP / MBEL55E).